A 565-amino-acid polypeptide reads, in one-letter code: Protein nucleotidyltransferase YdiU (565 aa).

Residues Gly-118, Gly-120, Arg-121, Lys-141, Asp-153, Gly-154, Arg-211, and Arg-218 each contribute to the ATP site. Asp-290 functions as the Proton acceptor in the catalytic mechanism. The Mg(2+) site is built by Asn-291 and Asp-300. An ATP-binding site is contributed by Asp-300.

This sequence belongs to the SELO family. It depends on Mg(2+) as a cofactor. The cofactor is Mn(2+).

It catalyses the reaction L-seryl-[protein] + ATP = 3-O-(5'-adenylyl)-L-seryl-[protein] + diphosphate. The enzyme catalyses L-threonyl-[protein] + ATP = 3-O-(5'-adenylyl)-L-threonyl-[protein] + diphosphate. It carries out the reaction L-tyrosyl-[protein] + ATP = O-(5'-adenylyl)-L-tyrosyl-[protein] + diphosphate. The catalysed reaction is L-histidyl-[protein] + UTP = N(tele)-(5'-uridylyl)-L-histidyl-[protein] + diphosphate. It catalyses the reaction L-seryl-[protein] + UTP = O-(5'-uridylyl)-L-seryl-[protein] + diphosphate. The enzyme catalyses L-tyrosyl-[protein] + UTP = O-(5'-uridylyl)-L-tyrosyl-[protein] + diphosphate. Nucleotidyltransferase involved in the post-translational modification of proteins. It can catalyze the addition of adenosine monophosphate (AMP) or uridine monophosphate (UMP) to a protein, resulting in modifications known as AMPylation and UMPylation. The sequence is that of Protein nucleotidyltransferase YdiU from Nitrosospira multiformis (strain ATCC 25196 / NCIMB 11849 / C 71).